A 313-amino-acid polypeptide reads, in one-letter code: Aspartate carbamoyltransferase catalytic subunit (313 aa).

The carbamoyl phosphate site is built by Arg-59 and Thr-60. Lys-87 provides a ligand contact to L-aspartate. The carbamoyl phosphate site is built by Arg-109, His-137, and Gln-140. Positions 170 and 224 each coordinate L-aspartate. 2 residues coordinate carbamoyl phosphate: Gly-265 and Pro-266.

Belongs to the aspartate/ornithine carbamoyltransferase superfamily. ATCase family. Heterododecamer (2C3:3R2) of six catalytic PyrB chains organized as two trimers (C3), and six regulatory PyrI chains organized as three dimers (R2).

The enzyme catalyses carbamoyl phosphate + L-aspartate = N-carbamoyl-L-aspartate + phosphate + H(+). The protein operates within pyrimidine metabolism; UMP biosynthesis via de novo pathway; (S)-dihydroorotate from bicarbonate: step 2/3. Functionally, catalyzes the condensation of carbamoyl phosphate and aspartate to form carbamoyl aspartate and inorganic phosphate, the committed step in the de novo pyrimidine nucleotide biosynthesis pathway. The polypeptide is Aspartate carbamoyltransferase catalytic subunit (Agrobacterium fabrum (strain C58 / ATCC 33970) (Agrobacterium tumefaciens (strain C58))).